The chain runs to 502 residues: ATP synthase subunit alpha (502 aa).

An ATP-binding site is contributed by 169–176 (GDRQTGKT).

Belongs to the ATPase alpha/beta chains family. In terms of assembly, F-type ATPases have 2 components, CF(1) - the catalytic core - and CF(0) - the membrane proton channel. CF(1) has five subunits: alpha(3), beta(3), gamma(1), delta(1), epsilon(1). CF(0) has three main subunits: a(1), b(2) and c(9-12). The alpha and beta chains form an alternating ring which encloses part of the gamma chain. CF(1) is attached to CF(0) by a central stalk formed by the gamma and epsilon chains, while a peripheral stalk is formed by the delta and b chains.

Its subcellular location is the cell membrane. The enzyme catalyses ATP + H2O + 4 H(+)(in) = ADP + phosphate + 5 H(+)(out). Its function is as follows. Produces ATP from ADP in the presence of a proton gradient across the membrane. The alpha chain is a regulatory subunit. This is ATP synthase subunit alpha from Desulfitobacterium hafniense (strain Y51).